The sequence spans 296 residues: GTPase Era (296 aa).

The Era-type G domain maps to K3–E170. Residues G11 to S18 are G1. G11–S18 lines the GTP pocket. The interval Q37–N41 is G2. The G3 stretch occupies residues D58 to G61. GTP is bound by residues D58–I62 and N120–D123. Residues N120–D123 are G4. Residues I149 to A151 form a G5 region. The KH type-2 domain maps to L201–E278.

The protein belongs to the TRAFAC class TrmE-Era-EngA-EngB-Septin-like GTPase superfamily. Era GTPase family. As to quaternary structure, monomer.

It is found in the cytoplasm. It localises to the cell membrane. Its function is as follows. An essential GTPase that binds both GDP and GTP, with rapid nucleotide exchange. Plays a role in 16S rRNA processing and 30S ribosomal subunit biogenesis and possibly also in cell cycle regulation and energy metabolism. The protein is GTPase Era of Clostridium botulinum (strain ATCC 19397 / Type A).